Consider the following 141-residue polypeptide: Hemoglobin subunit alpha-D (141 aa).

Residues 1–141 (MLNAEDKKLI…VSAVLAEKYR (141 aa)) enclose the Globin domain. The heme b site is built by histidine 58 and histidine 87.

It belongs to the globin family. In terms of assembly, heterotetramer of two alpha-D chains and two beta chains. As to expression, red blood cells.

Functionally, involved in oxygen transport from the lung to the various peripheral tissues. The protein is Hemoglobin subunit alpha-D (HBAD) of Phasianus colchicus colchicus (Black-necked pheasant).